Reading from the N-terminus, the 379-residue chain is ATP phosphoribosyltransferase regulatory subunit (379 aa).

The protein belongs to the class-II aminoacyl-tRNA synthetase family. HisZ subfamily. In terms of assembly, heteromultimer composed of HisG and HisZ subunits.

It is found in the cytoplasm. It participates in amino-acid biosynthesis; L-histidine biosynthesis; L-histidine from 5-phospho-alpha-D-ribose 1-diphosphate: step 1/9. In terms of biological role, required for the first step of histidine biosynthesis. May allow the feedback regulation of ATP phosphoribosyltransferase activity by histidine. The sequence is that of ATP phosphoribosyltransferase regulatory subunit from Paramagnetospirillum magneticum (strain ATCC 700264 / AMB-1) (Magnetospirillum magneticum).